A 103-amino-acid polypeptide reads, in one-letter code: Small ribosomal subunit protein uS10 (103 aa).

This sequence belongs to the universal ribosomal protein uS10 family. As to quaternary structure, part of the 30S ribosomal subunit.

Involved in the binding of tRNA to the ribosomes. The polypeptide is Small ribosomal subunit protein uS10 (Ruthia magnifica subsp. Calyptogena magnifica).